A 270-amino-acid polypeptide reads, in one-letter code: Formamidopyrimidine-DNA glycosylase (270 aa).

Catalysis depends on Pro2, which acts as the Schiff-base intermediate with DNA. Catalysis depends on Glu3, which acts as the Proton donor. Catalysis depends on Lys58, which acts as the Proton donor; for beta-elimination activity. Positions 91, 110, and 151 each coordinate DNA. The FPG-type zinc finger occupies 236–270 (FVYGRGGQPCKVCGTTLREIKLGQRASVYCPKCQR). Arg260 (proton donor; for delta-elimination activity) is an active-site residue.

This sequence belongs to the FPG family. In terms of assembly, monomer. Requires Zn(2+) as cofactor.

It catalyses the reaction Hydrolysis of DNA containing ring-opened 7-methylguanine residues, releasing 2,6-diamino-4-hydroxy-5-(N-methyl)formamidopyrimidine.. The enzyme catalyses 2'-deoxyribonucleotide-(2'-deoxyribose 5'-phosphate)-2'-deoxyribonucleotide-DNA = a 3'-end 2'-deoxyribonucleotide-(2,3-dehydro-2,3-deoxyribose 5'-phosphate)-DNA + a 5'-end 5'-phospho-2'-deoxyribonucleoside-DNA + H(+). In terms of biological role, involved in base excision repair of DNA damaged by oxidation or by mutagenic agents. Acts as a DNA glycosylase that recognizes and removes damaged bases. Has a preference for oxidized purines, such as 7,8-dihydro-8-oxoguanine (8-oxoG). Has AP (apurinic/apyrimidinic) lyase activity and introduces nicks in the DNA strand. Cleaves the DNA backbone by beta-delta elimination to generate a single-strand break at the site of the removed base with both 3'- and 5'-phosphates. The protein is Formamidopyrimidine-DNA glycosylase of Pseudomonas savastanoi pv. phaseolicola (strain 1448A / Race 6) (Pseudomonas syringae pv. phaseolicola (strain 1448A / Race 6)).